Consider the following 380-residue polypeptide: Cytochrome b (380 aa).

4 helical membrane-spanning segments follow: residues 34–54 (FGSL…LLAM), 78–99 (WLIR…YLHI), 114–134 (WNTG…GYVL), and 179–199 (FFAL…IHLT). Positions 84 and 98 each coordinate heme b. Positions 183 and 197 each coordinate heme b. Residue His202 coordinates a ubiquinone. The next 4 membrane-spanning stretches (helical) occupy residues 227–247 (LKDA…ALFS), 289–309 (LGGV…PLLH), 321–341 (LSQL…WIGS), and 348–368 (FIII…ILFP).

It belongs to the cytochrome b family. In terms of assembly, the cytochrome bc1 complex contains 11 subunits: 3 respiratory subunits (MT-CYB, CYC1 and UQCRFS1), 2 core proteins (UQCRC1 and UQCRC2) and 6 low-molecular weight proteins (UQCRH/QCR6, UQCRB/QCR7, UQCRQ/QCR8, UQCR10/QCR9, UQCR11/QCR10 and a cleavage product of UQCRFS1). This cytochrome bc1 complex then forms a dimer. It depends on heme b as a cofactor.

It is found in the mitochondrion inner membrane. Component of the ubiquinol-cytochrome c reductase complex (complex III or cytochrome b-c1 complex) that is part of the mitochondrial respiratory chain. The b-c1 complex mediates electron transfer from ubiquinol to cytochrome c. Contributes to the generation of a proton gradient across the mitochondrial membrane that is then used for ATP synthesis. The polypeptide is Cytochrome b (MT-CYB) (Oceanodroma tethys (Wedge-rumped storm-petrel)).